The sequence spans 177 residues: Coatomer subunit zeta-1 (177 aa).

At M1 the chain carries N-acetylmethionine.

This sequence belongs to the adaptor complexes small subunit family. As to quaternary structure, oligomeric complex that consists of at least the alpha, beta, beta', gamma, delta, epsilon and zeta subunits.

It is found in the cytoplasm. The protein resides in the golgi apparatus membrane. The protein localises to the cytoplasmic vesicle. It localises to the COPI-coated vesicle membrane. In terms of biological role, the coatomer is a cytosolic protein complex that binds to dilysine motifs and reversibly associates with Golgi non-clathrin-coated vesicles, which further mediate biosynthetic protein transport from the ER, via the Golgi up to the trans Golgi network. Coatomer complex is required for budding from Golgi membranes, and is essential for the retrograde Golgi-to-ER transport of dilysine-tagged proteins. The zeta subunit may be involved in regulating the coat assembly and, hence, the rate of biosynthetic protein transport due to its association-dissociation properties with the coatomer complex. This Bos taurus (Bovine) protein is Coatomer subunit zeta-1 (COPZ1).